A 1013-amino-acid chain; its full sequence is Probable ubiquitination network signaling protein acrB (1013 aa).

Disordered regions lie at residues Met-1–Thr-65 and Ser-105–Thr-137. Polar residues predominate over residues Gln-30–Thr-65. 3 helical membrane-spanning segments follow: residues Ile-158–Leu-178, Leu-211–Thr-231, and Ser-254–Ile-274. The disordered stretch occupies residues Arg-339–Thr-367. Residues Thr-596 to Ala-782 adopt a coiled-coil conformation. A compositionally biased stretch (polar residues) spans Ser-875–Ser-899. Disordered regions lie at residues Ser-875 to Gln-902 and Asp-953 to Asn-1013. A compositionally biased stretch (basic and acidic residues) spans Leu-954 to Ser-965. Over residues Ser-993–Ser-1002 the composition is skewed to gly residues. Residues Gly-1003 to Asn-1013 are compositionally biased toward low complexity.

It belongs to the acrB family.

The protein localises to the membrane. Functionally, component of the regulatory network controlling carbon source utilization through ubiquitination and deubiquitination involving creA, creB, creC, creD and acrB. Involved in resistance to acriflavine, and required for normal growth on a range of sole carbon sources, including fructose, cellobiose, raffinose, and starch, and reduced utilization of amino acids, including GABA and beta-alanine, as sole carbon and nitrogen sources. This Aspergillus oryzae (strain ATCC 42149 / RIB 40) (Yellow koji mold) protein is Probable ubiquitination network signaling protein acrB (acrB).